A 266-amino-acid polypeptide reads, in one-letter code: Thymidylate synthase (266 aa).

Arg24 lines the dUMP pocket. Residue His54 participates in (6R)-5,10-methylene-5,6,7,8-tetrahydrofolate binding. Residue 129 to 130 (RR) participates in dUMP binding. The Nucleophile role is filled by Cys149. DUMP-binding positions include 169 to 172 (RSAD), Asn180, and 210 to 212 (HIY). A (6R)-5,10-methylene-5,6,7,8-tetrahydrofolate-binding site is contributed by Asp172. Ala265 contacts (6R)-5,10-methylene-5,6,7,8-tetrahydrofolate.

The protein belongs to the thymidylate synthase family. Bacterial-type ThyA subfamily. Homodimer.

Its subcellular location is the cytoplasm. It catalyses the reaction dUMP + (6R)-5,10-methylene-5,6,7,8-tetrahydrofolate = 7,8-dihydrofolate + dTMP. The protein operates within pyrimidine metabolism; dTTP biosynthesis. Catalyzes the reductive methylation of 2'-deoxyuridine-5'-monophosphate (dUMP) to 2'-deoxythymidine-5'-monophosphate (dTMP) while utilizing 5,10-methylenetetrahydrofolate (mTHF) as the methyl donor and reductant in the reaction, yielding dihydrofolate (DHF) as a by-product. This enzymatic reaction provides an intracellular de novo source of dTMP, an essential precursor for DNA biosynthesis. The protein is Thymidylate synthase of Mycolicibacterium paratuberculosis (strain ATCC BAA-968 / K-10) (Mycobacterium paratuberculosis).